Consider the following 282-residue polypeptide: Bifunctional protein FolD (282 aa).

Residues 165 to 167 (GRS) and serine 190 contribute to the NADP(+) site.

It belongs to the tetrahydrofolate dehydrogenase/cyclohydrolase family. In terms of assembly, homodimer.

It catalyses the reaction (6R)-5,10-methylene-5,6,7,8-tetrahydrofolate + NADP(+) = (6R)-5,10-methenyltetrahydrofolate + NADPH. It carries out the reaction (6R)-5,10-methenyltetrahydrofolate + H2O = (6R)-10-formyltetrahydrofolate + H(+). Its pathway is one-carbon metabolism; tetrahydrofolate interconversion. In terms of biological role, catalyzes the oxidation of 5,10-methylenetetrahydrofolate to 5,10-methenyltetrahydrofolate and then the hydrolysis of 5,10-methenyltetrahydrofolate to 10-formyltetrahydrofolate. The protein is Bifunctional protein FolD of Acinetobacter baumannii (strain ATCC 17978 / DSM 105126 / CIP 53.77 / LMG 1025 / NCDC KC755 / 5377).